The primary structure comprises 498 residues: ATP synthase subunit beta, chloroplastic (498 aa).

Glycine 172 to threonine 179 is an ATP binding site.

Belongs to the ATPase alpha/beta chains family. As to quaternary structure, F-type ATPases have 2 components, CF(1) - the catalytic core - and CF(0) - the membrane proton channel. CF(1) has five subunits: alpha(3), beta(3), gamma(1), delta(1), epsilon(1). CF(0) has four main subunits: a(1), b(1), b'(1) and c(9-12).

It localises to the plastid. The protein resides in the chloroplast thylakoid membrane. It catalyses the reaction ATP + H2O + 4 H(+)(in) = ADP + phosphate + 5 H(+)(out). In terms of biological role, produces ATP from ADP in the presence of a proton gradient across the membrane. The catalytic sites are hosted primarily by the beta subunits. In Triticum aestivum (Wheat), this protein is ATP synthase subunit beta, chloroplastic.